Here is a 353-residue protein sequence, read N- to C-terminus: MSEPLKPRIDFAEPLKEEPTSAFKAQQTFSEAESRTFAPAAIDERPEDEGVAEAAVDAALRPKRSLWRKMVMGGLALFGASVVGQGVQWTMNAWQTQDWVALGGCAAGALIIGAGVGSVVTEWRRLWRLRQRAHERDEARELLHSHSVGKGRAFCEKLAQQAGIDQSHPALQRWYAAIHETQNDREIVGLYAHLVQLVLDAQARREISRFAAESTLMIAVSSLALVDMAFIAWRNLRLINRIATLYGIELGYYSRLRLFRLVLLNIAFAGASELVREVGMDWMSQDLAARLSTRAAQGIGAGLLTARLGIKAMELCRPLPWIDNDKPRLGDFRRQLIGQLKETLQKSKSSPEK.

The segment covering 1–19 (MSEPLKPRIDFAEPLKEEP) has biased composition (basic and acidic residues). A disordered region spans residues 1 to 35 (MSEPLKPRIDFAEPLKEEPTSAFKAQQTFSEAESR). Helical transmembrane passes span 70 to 90 (MVMG…VQWT), 100 to 120 (VALG…GSVV), and 213 to 233 (ESTL…FIAW).

The protein belongs to the UPF0283 family.

The protein localises to the cell inner membrane. The chain is UPF0283 membrane protein YcjF from Salmonella gallinarum (strain 287/91 / NCTC 13346).